Consider the following 87-residue polypeptide: Cobalt transport protein CbiN (87 aa).

Transmembrane regions (helical) follow at residues 4 to 24 (LLLLLILLIFAAKVTAEEWAG) and 58 to 78 (MLFSLQAAIGSLIIGYFLGYY).

It belongs to the CbiN family. Forms an energy-coupling factor (ECF) transporter complex composed of an ATP-binding protein (A component, CbiO), a transmembrane protein (T component, CbiQ) and 2 possible substrate-capture proteins (S components, CbiM and CbiN) of unknown stoichimetry.

It is found in the cell membrane. It participates in cofactor biosynthesis; adenosylcobalamin biosynthesis. Its function is as follows. Part of the energy-coupling factor (ECF) transporter complex CbiMNOQ involved in cobalt import. The polypeptide is Cobalt transport protein CbiN (Archaeoglobus fulgidus (strain ATCC 49558 / DSM 4304 / JCM 9628 / NBRC 100126 / VC-16)).